Reading from the N-terminus, the 180-residue chain is ATP synthase subunit delta (180 aa).

This sequence belongs to the ATPase delta chain family. As to quaternary structure, F-type ATPases have 2 components, F(1) - the catalytic core - and F(0) - the membrane proton channel. F(1) has five subunits: alpha(3), beta(3), gamma(1), delta(1), epsilon(1). F(0) has three main subunits: a(1), b(2) and c(10-14). The alpha and beta chains form an alternating ring which encloses part of the gamma chain. F(1) is attached to F(0) by a central stalk formed by the gamma and epsilon chains, while a peripheral stalk is formed by the delta and b chains.

It is found in the cell membrane. Its function is as follows. F(1)F(0) ATP synthase produces ATP from ADP in the presence of a proton or sodium gradient. F-type ATPases consist of two structural domains, F(1) containing the extramembraneous catalytic core and F(0) containing the membrane proton channel, linked together by a central stalk and a peripheral stalk. During catalysis, ATP synthesis in the catalytic domain of F(1) is coupled via a rotary mechanism of the central stalk subunits to proton translocation. This protein is part of the stalk that links CF(0) to CF(1). It either transmits conformational changes from CF(0) to CF(1) or is implicated in proton conduction. The protein is ATP synthase subunit delta of Alkaliphilus oremlandii (strain OhILAs) (Clostridium oremlandii (strain OhILAs)).